Reading from the N-terminus, the 271-residue chain is Probable ribosomal RNA small subunit methyltransferase A (271 aa).

Residues Asn-22, Leu-24, Gly-49, Glu-70, Asp-97, and Asn-112 each contribute to the S-adenosyl-L-methionine site.

The protein belongs to the class I-like SAM-binding methyltransferase superfamily. rRNA adenine N(6)-methyltransferase family. RsmA subfamily.

Its subcellular location is the cytoplasm. Specifically dimethylates two adjacent adenosines in the loop of a conserved hairpin near the 3'-end of 16S rRNA in the 30S particle. May play a critical role in biogenesis of 30S subunits. The chain is Probable ribosomal RNA small subunit methyltransferase A from Methanosphaera stadtmanae (strain ATCC 43021 / DSM 3091 / JCM 11832 / MCB-3).